Reading from the N-terminus, the 465-residue chain is Branched-chain amino acid permease BcaP (465 aa).

13 consecutive transmembrane segments (helical) span residues 35–55 (LLGIGAIIGTGIFVLTGTGAV), 57–77 (AGPGLTISFVVAALACLFAAL), 103–123 (LMAFIIGWDLILEYMLAVSAV), 133–153 (SFLSGLGIHLPVALTAAPGAV), 159–179 (LFNLPAFVIVMAITYLLYLGI), 188–208 (IMVILKILVVLLFIAVAAVYV), 216–236 (FMPMGFGGVFSAAALVFFAFI), 258–278 (GIIFSLLVCTILYVTVSAIMT), 305–325 (VAGIIDIGAVLGMTTVMLVML), 355–375 (PYVATWFFGTMSALLGSLVPL), 380–400 (KLVNIGTLSAFVLISVAVIVL), 413–432 (CPGVPVIPGLAILFCLFLIL), and 437–456 (VTIVRFLVWLLIGLVIYFLY).

It belongs to the amino acid-polyamine-organocation (APC) superfamily.

It is found in the cell membrane. Its activity is regulated as follows. Isoleucine uptake is efficiently reduced in the presence of 100-fold excess valine, leucine, alanine, threonine, serine, cysteine, asparagine, and a nonproteinaceous amino acid 4-azaleucine. Functionally, branched-chain amino acid transport system which is involved in the uptake of isoleucine, valine and probably leucine. Can also transport threonine, and is active as a minor serine permease. May be an amino acid permease of rather broad specificity, because several amino acids, albeit at 100-fold excess, are able to prevent isoleucine uptake. Probably does not transport methionine. Together with BraB and BrnQ, plays an important role in the activation of CodY, a branched-chain amino acid-responsive transcriptional regulator that controls the expression of several dozen transcription units in B.subtilis. The chain is Branched-chain amino acid permease BcaP from Bacillus subtilis (strain 168).